Consider the following 202-residue polypeptide: UPF0301 protein mlr7511 (202 aa).

It belongs to the UPF0301 (AlgH) family.

This is UPF0301 protein mlr7511 from Mesorhizobium japonicum (strain LMG 29417 / CECT 9101 / MAFF 303099) (Mesorhizobium loti (strain MAFF 303099)).